A 292-amino-acid chain; its full sequence is GTP cyclohydrolase FolE2 (292 aa).

This sequence belongs to the GTP cyclohydrolase IV family.

The catalysed reaction is GTP + H2O = 7,8-dihydroneopterin 3'-triphosphate + formate + H(+). It functions in the pathway cofactor biosynthesis; 7,8-dihydroneopterin triphosphate biosynthesis; 7,8-dihydroneopterin triphosphate from GTP: step 1/1. Converts GTP to 7,8-dihydroneopterin triphosphate. The protein is GTP cyclohydrolase FolE2 of Macrococcus caseolyticus (strain JCSC5402) (Macrococcoides caseolyticum).